A 120-amino-acid chain; its full sequence is Holo-[acyl-carrier-protein] synthase (120 aa).

The Mg(2+) site is built by D6 and E55.

Belongs to the P-Pant transferase superfamily. AcpS family. Requires Mg(2+) as cofactor.

The protein localises to the cytoplasm. The catalysed reaction is apo-[ACP] + CoA = holo-[ACP] + adenosine 3',5'-bisphosphate + H(+). Functionally, transfers the 4'-phosphopantetheine moiety from coenzyme A to a Ser of acyl-carrier-protein. The protein is Holo-[acyl-carrier-protein] synthase of Pelodictyon phaeoclathratiforme (strain DSM 5477 / BU-1).